The primary structure comprises 428 residues: 3-phosphoshikimate 1-carboxyvinyltransferase (428 aa).

Positions 22, 23, and 27 each coordinate 3-phosphoshikimate. Phosphoenolpyruvate is bound at residue Lys-22. 2 residues coordinate phosphoenolpyruvate: Gly-94 and Arg-122. The 3-phosphoshikimate site is built by Ser-168, Ser-169, Gln-170, Ser-196, Asp-315, and Lys-342. Residue Gln-170 coordinates phosphoenolpyruvate. Catalysis depends on Asp-315, which acts as the Proton acceptor. Phosphoenolpyruvate-binding residues include Arg-346, Arg-389, and Lys-414.

This sequence belongs to the EPSP synthase family. Monomer.

It is found in the cytoplasm. It carries out the reaction 3-phosphoshikimate + phosphoenolpyruvate = 5-O-(1-carboxyvinyl)-3-phosphoshikimate + phosphate. The protein operates within metabolic intermediate biosynthesis; chorismate biosynthesis; chorismate from D-erythrose 4-phosphate and phosphoenolpyruvate: step 6/7. Its function is as follows. Catalyzes the transfer of the enolpyruvyl moiety of phosphoenolpyruvate (PEP) to the 5-hydroxyl of shikimate-3-phosphate (S3P) to produce enolpyruvyl shikimate-3-phosphate and inorganic phosphate. The sequence is that of 3-phosphoshikimate 1-carboxyvinyltransferase from Thiobacillus denitrificans (strain ATCC 25259 / T1).